We begin with the raw amino-acid sequence, 132 residues long: uncharacterized protein (132 aa).

The disordered stretch occupies residues 1–34 (MTAGAGGSPPTRRCPATEDRAPATVATPSSADPT).

It to M.tuberculosis Rv2656c.

This is an uncharacterized protein from Mycobacterium tuberculosis (strain CDC 1551 / Oshkosh).